A 302-amino-acid polypeptide reads, in one-letter code: tRNA demethylase abh1 (302 aa).

Residues tryptophan 142 and 149–151 each bind substrate; that span reads YDW. The 113-residue stretch at 187–299 folds into the Fe2OG dioxygenase domain; sequence KAEAAIVNFY…RVNFNVRQVR (113 aa). Residue 194-196 participates in 2-oxoglutarate binding; it reads NFY. Fe cation contacts are provided by histidine 205 and aspartate 207. Arginine 235 lines the substrate pocket. Residue histidine 261 participates in Fe cation binding. 290-296 is a binding site for 2-oxoglutarate; the sequence is RVNFNVR.

This sequence belongs to the alkB family. Fe(2+) is required as a cofactor.

The protein localises to the cytoplasm. The protein resides in the nucleus. The catalysed reaction is an N(1)-methyladenosine in tRNA + 2-oxoglutarate + O2 = an adenosine in tRNA + formaldehyde + succinate + CO2. It catalyses the reaction N(1)-methyladenosine(58) in tRNA + 2-oxoglutarate + O2 = adenosine(58) in tRNA + formaldehyde + succinate + CO2. Its function is as follows. Dioxygenase that acts as on nucleic acids, such as DNA and tRNA. Requires molecular oxygen, alpha-ketoglutarate and iron. Mainly acts as a tRNA demethylase by removing N(1)-methyladenine from various tRNAs, with a preference for N(1)-methyladenine at position 58 (m1A58) present on a stem loop structure of tRNAs. Acts as a regulator of translation initiation and elongation. Does not appear to possess DNA repair activity; no activity towards methylated DNA or etheno adducts. Exhibits a weak and unstable DNA lyase activity; this activity is probably not biologically significant and proceeds by a mechanism different from the classical dioxygenase reaction as it does not require 2-oxoglutarate or iron. The protein is tRNA demethylase abh1 (abh1) of Schizosaccharomyces pombe (strain 972 / ATCC 24843) (Fission yeast).